A 934-amino-acid chain; its full sequence is Protocadherin gamma-C3 (934 aa).

Residues 1–31 form the signal peptide; the sequence is MVPEAWRSGLVSTGRVVGVLLLLGALNKAST. Cadherin domains lie at 32–135, 136–244, 245–352, 353–457, 458–567, and 572–685; these read VIHY…NPAF, PTQE…APVF, NQSL…APEI, TVTS…PPQS, SQSS…APQV, and PGGS…APRE. The Extracellular segment spans residues 32-693; that stretch reads VIHYEIPEER…REQKKNLTFY (662 aa). Asn245, Asn424, Asn478, Asn550, Asn615, and Asn689 each carry an N-linked (GlcNAc...) asparagine glycan. Residues 694–714 traverse the membrane as a helical segment; sequence LLLSLILVSVGFVVTVFGVII. The Cytoplasmic portion of the chain corresponds to 715 to 934; sequence FKVYKWKQSR…KKKSGKKEKK (220 aa). Disordered regions lie at residues 804–843 and 904–934; these read ESAPPGQQAPPNTDWRFSQAQRPGTSGSQNGDDTGTWPNN and ATLTNAAGKRDGKAPAGGNGNKKKSGKKEKK. The span at 812 to 843 shows a compositional bias: polar residues; it reads APPNTDWRFSQAQRPGTSGSQNGDDTGTWPNN. Residues 924–934 are compositionally biased toward basic residues; the sequence is NKKKSGKKEKK.

The protein localises to the cell membrane. In terms of biological role, potential calcium-dependent cell-adhesion protein. May be involved in the establishment and maintenance of specific neuronal connections in the brain. In Homo sapiens (Human), this protein is Protocadherin gamma-C3 (PCDHGC3).